The chain runs to 425 residues: Glutamyl-tRNA reductase (425 aa).

Substrate contacts are provided by residues 49–52, Ser-107, 112–114, and Gln-118; these read TCNR and EPQ. Cys-50 functions as the Nucleophile in the catalytic mechanism. Residue 187–192 coordinates NADP(+); the sequence is GAGETI.

The protein belongs to the glutamyl-tRNA reductase family. Homodimer.

The enzyme catalyses (S)-4-amino-5-oxopentanoate + tRNA(Glu) + NADP(+) = L-glutamyl-tRNA(Glu) + NADPH + H(+). The protein operates within porphyrin-containing compound metabolism; protoporphyrin-IX biosynthesis; 5-aminolevulinate from L-glutamyl-tRNA(Glu): step 1/2. In terms of biological role, catalyzes the NADPH-dependent reduction of glutamyl-tRNA(Glu) to glutamate 1-semialdehyde (GSA). In Pseudomonas putida (strain GB-1), this protein is Glutamyl-tRNA reductase.